We begin with the raw amino-acid sequence, 319 residues long: Polyprenal reductase (319 aa).

The Cytoplasmic portion of the chain corresponds to 1–12; it reads MQLVQLLPPGVS. Residues 13-33 traverse the membrane as a helical segment; that stretch reads LLALVWLAVDAAFLTALLLYL. Residues 34–79 are Lumenal-facing; it reads QRGCDSGRSLLCSVFQDLIRYGKTKSGLRRPSWLQWFDIPKRCFWH. Residues 80-100 traverse the membrane as a helical segment; sequence FYFVSLVWNGFLLWILLHLLL. Residues 101–122 are Cytoplasmic-facing; the sequence is QSVPVPEWLQAVLQFLCAGSEP. Residues 123 to 143 form a helical membrane-spanning segment; sequence QVLGGELSVVLAFSLLWLHSL. The Lumenal segment spans residues 144–158; sequence RRLLECLFVSIFSNG. Residues 159 to 179 form a helical membrane-spanning segment; the sequence is VIHFVQYCFGLGYYILIGFTI. The Cytoplasmic segment spans residues 180-195; sequence LGYCPLDRRTAVSLDD. A helical transmembrane segment spans residues 196–216; it reads LLMQGNWYHILGLTLYVWASL. Over 217-266 the chain is Lumenal; it reads HQYTCHCILADLRKSASGAIINLKHAVPTGDWFEKVSCPHYFAELLIYLS. Residues 267-287 traverse the membrane as a helical segment; that stretch reads IAVVFGLLNTIWWLVVLYVLL. Residues 288-319 lie on the Cytoplasmic side of the membrane; sequence SQALAAVLCHEFYHEKFDSYPIHRKAFIPLIF.

It belongs to the steroid 5-alpha reductase family. Polyprenal reductase subfamily.

It localises to the endoplasmic reticulum membrane. The catalysed reaction is a di-trans,poly-cis-dolichal + NADP(+) = a di-trans,poly-cis-polyprenal + NADPH + H(+). It carries out the reaction a 3-oxo-5alpha-steroid + NADP(+) = a 3-oxo-Delta(4)-steroid + NADPH + H(+). The enzyme catalyses androst-4-ene-3,17-dione + NADPH + H(+) = 5alpha-androstan-3,17-dione + NADP(+). It catalyses the reaction 17beta-hydroxy-5alpha-androstan-3-one + NADP(+) = testosterone + NADPH + H(+). It participates in protein modification; protein glycosylation. In terms of biological role, plays a key role in early steps of protein N-linked glycosylation by being involved in the conversion of polyprenol into dolichol. Acts as a polyprenal reductase that mediates the reduction of polyprenal into dolichal in a NADP-dependent mechanism. Dolichols are required for the synthesis of dolichol-linked monosaccharides and the oligosaccharide precursor used for N-glycosylation. Also able to convert testosterone (T) into 5-alpha-dihydrotestosterone (DHT). This Xenopus laevis (African clawed frog) protein is Polyprenal reductase (srd5a3).